The primary structure comprises 56 residues: Single-pass membrane and coiled-coil domain-containing protein 4 homolog (56 aa).

Positions M1–H27 are disordered. The stretch at A9–V31 forms a coiled coil. The chain crosses the membrane as a helical span at residues V30 to Y50.

It belongs to the SMCO4 family.

The protein localises to the membrane. The polypeptide is Single-pass membrane and coiled-coil domain-containing protein 4 homolog (Nematostella vectensis (Starlet sea anemone)).